Here is a 428-residue protein sequence, read N- to C-terminus: Probable protein phosphatase 2C 5 (428 aa).

Residues 25-297 enclose the PPM-type phosphatase domain; it reads RSEKVEKPFV…DDTTCVVVDI (273 aa). 4 residues coordinate Mn(2+): aspartate 73, glycine 74, aspartate 249, and aspartate 288.

The protein belongs to the PP2C family. Requires Mg(2+) as cofactor. Mn(2+) is required as a cofactor.

The catalysed reaction is O-phospho-L-seryl-[protein] + H2O = L-seryl-[protein] + phosphate. The enzyme catalyses O-phospho-L-threonyl-[protein] + H2O = L-threonyl-[protein] + phosphate. This chain is Probable protein phosphatase 2C 5, found in Arabidopsis thaliana (Mouse-ear cress).